The following is a 149-amino-acid chain: Large ribosomal subunit protein uL13 (149 aa).

The protein belongs to the universal ribosomal protein uL13 family. In terms of assembly, part of the 50S ribosomal subunit.

Its function is as follows. This protein is one of the early assembly proteins of the 50S ribosomal subunit, although it is not seen to bind rRNA by itself. It is important during the early stages of 50S assembly. This is Large ribosomal subunit protein uL13 from Chlorobium luteolum (strain DSM 273 / BCRC 81028 / 2530) (Pelodictyon luteolum).